Here is a 419-residue protein sequence, read N- to C-terminus: Transcription regulator lscL (419 aa).

The zn(2)-C6 fungal-type DNA-binding region spans 12–35 (RIRKVKCDEKKPCCQKCIDTGRTC).

The protein localises to the nucleus. Its function is as follows. Transcription factor that may coregulate the expression of the gene cluster that mediates the biosynthesis of the lipopeptide antibiotics leucinostatins that show extensive biological activities, including antimalarial, antiviral, antibacterial, antifungal, and antitumor activities, as well as phytotoxic. The polypeptide is Transcription regulator lscL (Purpureocillium lilacinum (Paecilomyces lilacinus)).